Consider the following 187-residue polypeptide: UPF0301 protein YqgE (187 aa).

Belongs to the UPF0301 (AlgH) family.

This is UPF0301 protein YqgE from Escherichia coli O7:K1 (strain IAI39 / ExPEC).